Consider the following 327-residue polypeptide: uncharacterized protein (327 aa).

Positions 129 to 306 (TPLQNQEATT…DNKKTVTTSS (178 aa)) are disordered. Residues 130-144 (PLQNQEATTSPTIES) show a composition bias toward polar residues. Composition is skewed to basic and acidic residues over residues 184–196 (KSVE…DRNV) and 233–276 (TKDE…EKIV).

This is an uncharacterized protein from Caenorhabditis elegans.